We begin with the raw amino-acid sequence, 500 residues long: Probable malate:quinone oxidoreductase (500 aa).

The protein belongs to the MQO family. FAD is required as a cofactor.

The catalysed reaction is (S)-malate + a quinone = a quinol + oxaloacetate. Its pathway is carbohydrate metabolism; tricarboxylic acid cycle; oxaloacetate from (S)-malate (quinone route): step 1/1. The polypeptide is Probable malate:quinone oxidoreductase (Gluconobacter oxydans (strain 621H) (Gluconobacter suboxydans)).